A 350-amino-acid polypeptide reads, in one-letter code: DNA-directed RNA polymerase subunit alpha (350 aa).

The tract at residues 1–226 is alpha N-terminal domain (alpha-NTD); sequence MLISQRPTLS…ELFGLARELN (226 aa). Positions 241–350 are alpha C-terminal domain (alpha-CTD); sequence ADHIASFALP…NQDYAETEQL (110 aa). A disordered region spans residues 326–350; sequence ATGTWNSDAGYDLEDNQDYAETEQL. Residues 336 to 350 show a composition bias toward acidic residues; it reads YDLEDNQDYAETEQL.

The protein belongs to the RNA polymerase alpha chain family. In terms of assembly, homodimer. The RNAP catalytic core consists of 2 alpha, 1 beta, 1 beta' and 1 omega subunit. When a sigma factor is associated with the core the holoenzyme is formed, which can initiate transcription.

The catalysed reaction is RNA(n) + a ribonucleoside 5'-triphosphate = RNA(n+1) + diphosphate. In terms of biological role, DNA-dependent RNA polymerase catalyzes the transcription of DNA into RNA using the four ribonucleoside triphosphates as substrates. The protein is DNA-directed RNA polymerase subunit alpha of Mycobacterium sp. (strain JLS).